Here is a 118-residue protein sequence, read N- to C-terminus: Large ribosomal subunit protein uL24 (118 aa).

Positions 1 to 24 (MSEQPHKQRTRTKRASLHEKQDQV) are disordered.

The protein belongs to the universal ribosomal protein uL24 family. As to quaternary structure, part of the 50S ribosomal subunit.

Its function is as follows. One of two assembly initiator proteins, it binds directly to the 5'-end of the 23S rRNA, where it nucleates assembly of the 50S subunit. Functionally, located at the polypeptide exit tunnel on the outside of the subunit. The chain is Large ribosomal subunit protein uL24 from Halobacterium salinarum (strain ATCC 700922 / JCM 11081 / NRC-1) (Halobacterium halobium).